The sequence spans 305 residues: Homoserine O-acetyltransferase (305 aa).

The active-site Acyl-thioester intermediate is Cys-142. 2 residues coordinate substrate: Lys-163 and Ser-192. The active-site Proton acceptor is the His-235. Glu-237 is a catalytic residue. Arg-249 contacts substrate.

It belongs to the MetA family.

The protein resides in the cytoplasm. The enzyme catalyses L-homoserine + acetyl-CoA = O-acetyl-L-homoserine + CoA. Its pathway is amino-acid biosynthesis; L-methionine biosynthesis via de novo pathway; O-acetyl-L-homoserine from L-homoserine: step 1/1. Functionally, transfers an acetyl group from acetyl-CoA to L-homoserine, forming acetyl-L-homoserine. The sequence is that of Homoserine O-acetyltransferase from Hyphomonas neptunium (strain ATCC 15444).